The sequence spans 777 residues: Glucocorticoid receptor (777 aa).

Residues 1 to 14 (MDSKESLTPGKEEN) are compositionally biased toward basic and acidic residues. Residues 1–23 (MDSKESLTPGKEENPSSVLTQER) are disordered. A modulating region spans residues 1-420 (MDSKESLTPG…TATTGPPPKL (420 aa)). T8 bears the Phosphothreonine mark. R23 is modified (omega-N-methylarginine). Residues S45, S113, S134, and S141 each carry the phosphoserine modification. The disordered stretch occupies residues 130 to 182 (NRSTSVPENPKSSASSSVSAAPKEKEFPKTHSDVSSEQQNLKGQTGTNGGNVK). Residues 134 to 150 (SVPENPKSSASSSVSAA) show a composition bias toward low complexity. The segment covering 151–163 (PKEKEFPKTHSDV) has biased composition (basic and acidic residues). Over residues 164–174 (SSEQQNLKGQT) the composition is skewed to polar residues. Residues S203, S211, and S226 each carry the phosphoserine modification. A Glycyl lysine isopeptide (Lys-Gly) (interchain with G-Cter in SUMO2) cross-link involves residue K258. The residue at position 267 (S267) is a Phosphoserine. Glycyl lysine isopeptide (Lys-Gly) (interchain with G-Cter in SUMO); alternate cross-links involve residues K277 and K293. Glycyl lysine isopeptide (Lys-Gly) (interchain with G-Cter in SUMO2); alternate cross-links involve residues K277 and K293. The segment covering 394–414 (SSPSMRPDVSSPPSSSSTATT) has biased composition (low complexity). A disordered region spans residues 394–415 (SSPSMRPDVSSPPSSSSTATTG). At S404 the chain carries Phosphoserine. A Glycyl lysine isopeptide (Lys-Gly) (interchain with G-Cter in ubiquitin) cross-link involves residue K419. 2 consecutive NR C4-type zinc fingers follow at residues 421 to 441 (CLVC…CGSC) and 457 to 481 (CAGR…YRKC). The nuclear receptor DNA-binding region spans 421–486 (CLVCSDEASG…RYRKCLQAGM (66 aa)). K480, K492, K494, and K495 each carry N6-acetyllysine. The interaction with CLOCK stretch occupies residues 485 to 777 (GMNLEARKTK…NIKKLLFHQK (293 aa)). Residues 487 to 523 (NLEARKTKKKIKGIQQATTGVSQETSENPANKTIVPA) are hinge. Positions 524-758 (TLPQLTPTLV…FPEMLAEIIT (235 aa)) constitute an NR LBD domain. The tract at residues 532-697 (LVSLLEVIEP…EIRMTYIKEL (166 aa)) is interaction with CRY1. K703 participates in a covalent cross-link: Glycyl lysine isopeptide (Lys-Gly) (interchain with G-Cter in SUMO).

Belongs to the nuclear hormone receptor family. NR3 subfamily. In terms of assembly, heteromultimeric cytoplasmic complex with HSP90AA1, HSPA1A/HSPA1B, and FKBP5 or another immunophilin such as PPID, STIP1, or the immunophilin homolog PPP5C. Upon ligand binding FKBP5 dissociates from the complex and FKBP4 takes its place, thereby linking the complex to dynein and mediating transport to the nucleus, where the complex dissociates. Probably forms a complex composed of chaperones HSP90 and HSP70, co-chaperones CDC37, PPP5C, TSC1 and client protein TSC2, CDK4, AKT, RAF1 and NR3C1; this complex does not contain co-chaperones STIP1/HOP and PTGES3/p23. Directly interacts with UNC45A. Binds to DNA as a homodimer, and as heterodimer with NR3C2 or the retinoid X receptor. Binds STAT5A and STAT5B homodimers and heterodimers. Interacts with NRIP1, POU2F1, POU2F2 and TRIM28. Interacts with several coactivator complexes, including the SMARCA4 complex, CREBBP/EP300, TADA2L (Ada complex) and p160 coactivators such as NCOA2 and NCOA6. Interaction with BAG1 inhibits transactivation. Interacts with HEXIM1 and TGFB1I1. Interacts with NCOA1. Interacts with NCOA3, SMARCA4, SMARCC1, SMARCD1, and SMARCE1. Interacts with CLOCK, CRY1 and CRY2 in a ligand-dependent fashion. Interacts with CIART. Interacts with RWDD3. Interacts with UBE2I/UBC9 and this interaction is enhanced in the presence of RWDD3. Interacts with GRIP1. Interacts with NR4A3 (via nuclear receptor DNA-binding domain), represses transcription activity of NR4A3 on the POMC promoter Nur response element (NurRE). Directly interacts with PNRC2 to attract and form a complex with UPF1 and DCP1A; the interaction leads to rapid mRNA degradation. Interacts with GSK3B. Interacts with FNIP1 and FNIP2. Interacts (via C-terminus) with HNRNPU (via C-terminus). Interacts with MCM3AP. Interacts (via domain NR LBD) with HSP90AA1 and HSP90AB1. In the absence of hormonal ligand, interacts with TACC1. Interacts (via NR LBD domain) with ZNF764 (via KRAB domain); the interaction regulates transcription factor activity of NR3C1 by directing its actions toward certain biologic pathways. Acetylation by CLOCK reduces its binding to glucocorticoid response elements and its transcriptional activity. In terms of processing, increased proteasome-mediated degradation in response to glucocorticoids. Post-translationally, phosphorylated in the absence of hormone; becomes hyperphosphorylated in the presence of glucocorticoid. The Ser-203, Ser-226 and Ser-404-phosphorylated forms are mainly cytoplasmic, and the Ser-211-phosphorylated form is nuclear. Phosphorylation at Ser-211 increases transcriptional activity. Phosphorylation at Ser-203, Ser-226 and Ser-404 decreases signaling capacity. Phosphorylation at Ser-404 may protect from glucocorticoid-induced apoptosis. Phosphorylation at Ser-203 and Ser-211 is not required in regulation of chromosome segregation. May be dephosphorylated by PPP5C, attenuates NR3C1 action. Ubiquitinated by UBR5, leading to its degradation: UBR5 specifically recognizes and binds ligand-bound NR3C1 when it is not associated with coactivators (NCOAs). In presence of NCOAs, the UBR5-degron is not accessible, preventing its ubiquitination and degradation. In terms of processing, sumoylation at Lys-277 and Lys-293 negatively regulates its transcriptional activity. Sumoylation at Lys-703 positively regulates its transcriptional activity in the presence of RWDD3. Sumoylation at Lys-277 and Lys-293 is dispensable whereas sumoylation at Lys-703 is critical for the stimulatory effect of RWDD3 on its transcriptional activity. Heat shock increases sumoylation in a RWWD3-dependent manner.

The protein localises to the cytoplasm. It is found in the nucleus. It localises to the mitochondrion. Its subcellular location is the cytoskeleton. The protein resides in the spindle. The protein localises to the microtubule organizing center. It is found in the centrosome. It localises to the chromosome. Its subcellular location is the nucleoplasm. Functionally, receptor for glucocorticoids (GC). Has a dual mode of action: as a transcription factor that binds to glucocorticoid response elements (GRE), both for nuclear and mitochondrial DNA, and as a modulator of other transcription factors. Affects inflammatory responses, cellular proliferation and differentiation in target tissues. Involved in chromatin remodeling. Plays a role in rapid mRNA degradation by binding to the 5' UTR of target mRNAs and interacting with PNRC2 in a ligand-dependent manner which recruits the RNA helicase UPF1 and the mRNA-decapping enzyme DCP1A, leading to RNA decay. Could act as a coactivator for STAT5-dependent transcription upon growth hormone (GH) stimulation and could reveal an essential role of hepatic GR in the control of body growth. Mediates glucocorticoid-induced apoptosis. Promotes accurate chromosome segregation during mitosis. May act as a tumor suppressor. May play a negative role in adipogenesis through the regulation of lipolytic and antilipogenic gene expression. This chain is Glucocorticoid receptor (NR3C1), found in Aotus nancymaae (Ma's night monkey).